A 78-amino-acid chain; its full sequence is Calcium/calmodulin-dependent protein kinase II inhibitor 1 (78 aa).

The tract at residues N41–K68 is CAMK2 inhibitory domain.

The protein belongs to the CAMK2N family. In terms of assembly, interacts with CAMK2B; the presence of Ca(2+)/calmodulin increases the interaction but is not essential. Interacts with CAMK2A; this interaction requires CAMK2A activation by Ca(2+).

The protein localises to the synapse. It is found in the cell projection. It localises to the dendrite. The protein resides in the postsynaptic density. Potent and specific inhibitor of CaM-kinase II (CAMK2). Plays a role in the maintenance of long-term retrieval-induced memory in response to contextual fear. Modulates blood pressure and vascular reactivity via regulation of CAMK2 activity in addition to regulation of left ventricular mass. Mediates the NLRP3 inflammasome in cardiomyocytes via acting as an inhibitor of the MAPK14/p38 and MAPK8/JNK pathways, thereby regulating ventricular remodeling and cardiac rhythm post-myocardial infarction. Negatively effects insulin sensitivity and promotes lipid formation in adipose tissues independent of CAMK2 signaling. This is Calcium/calmodulin-dependent protein kinase II inhibitor 1 (CAMK2N1) from Bos taurus (Bovine).